The primary structure comprises 125 residues: Inner membrane protein YbjM (125 aa).

Topologically, residues 1–6 (MKHKQR) are cytoplasmic. Residues 7–27 (WAGAICCFVLFIVVCLFLATH) form a helical membrane-spanning segment. Topologically, residues 28 to 34 (MKGAFRA) are periplasmic. A helical membrane pass occupies residues 35 to 55 (AGHPEIGLLFFILPGAVASFF). At 56-64 (SQRREVLKP) the chain is on the cytoplasmic side. A helical membrane pass occupies residues 65 to 85 (LFGAMLAAPCSMLIMRLFFSP). The Periplasmic segment spans residues 86–92 (TRSFWQE). Residues 93–113 (LAWLLSAVFWCALGALCFLFI) form a helical membrane-spanning segment. The Cytoplasmic portion of the chain corresponds to 114–125 (SSLFKPQHRKNQ).

The protein localises to the cell inner membrane. The protein is Inner membrane protein YbjM (ybjM) of Escherichia coli O157:H7.